A 2353-amino-acid polypeptide reads, in one-letter code: Nonribosomal peptide synthetase 7 (2353 aa).

Positions 305–684 are adenylation 1; sequence TFSALNTRAN…AIEEVEDSAV (380 aa). A Carrier 1 domain is found at 776–853; sequence RDLTDSEKVV…QVAAAVQPQP (78 aa). Serine 813 carries the post-translational modification O-(pantetheine 4'-phosphoryl)serine. The condensation 1 stretch occupies residues 885–1147; that stretch reads EDAFPVTPFQ…LMVAPLRVKV (263 aa). The adenylation 2 stretch occupies residues 1338-1725; the sequence is TYAGLAIKMN…QTNVFRQCAV (388 aa). The Carrier 2 domain occupies 1826–1902; the sequence is EICSEAEREL…EQAALMVQGQ (77 aa). Residue serine 1863 is modified to O-(pantetheine 4'-phosphoryl)serine. A condensation 2 region spans residues 1939 to 2214; it reads EDIYPCSPGQ…NGNCANFLPY (276 aa).

Belongs to the NRP synthetase family.

In terms of biological role, nonribosomal peptide synthesis (NRPS) is a key mechanism responsible for the biosynthesis of bioactive metabolites which are potentially contributing to organismal virulence. The sequence is that of Nonribosomal peptide synthetase 7 (NRPS7) from Aspergillus fumigatus (strain ATCC MYA-4609 / CBS 101355 / FGSC A1100 / Af293) (Neosartorya fumigata).